The chain runs to 415 residues: Eukaryotic initiation factor 4A-III (415 aa).

The Q motif signature appears at 42–70 (PTFDTMGLREDLLRGIYAYGFEKPSAIQQ). ATP-binding positions include Lys-64, Gln-69, 86–93 (SQSGTGKT), and 89–94 (GTGKTA). Residues 73-243 (IKQIIKGRDV…NKFMTDPIRI (171 aa)) enclose the Helicase ATP-binding domain. Positions 191-194 (DEAD) match the DEAD box motif. The Helicase C-terminal domain maps to 254–415 (GIKQFFVAVE…EMPMNVADLI (162 aa)). ATP-binding positions include Asp-346 and 371 to 375 (RSGRY).

Belongs to the DEAD box helicase family. eIF4A subfamily. Identified in the spliceosome C complex. Part of the mRNA splicing-dependent exon junction complex (EJC) complex; the core complex contains casc3, eif4a3, magoh and rbm8a.

Its subcellular location is the nucleus. It is found in the nucleus speckle. It localises to the cytoplasm. The enzyme catalyses ATP + H2O = ADP + phosphate + H(+). ATP-dependent RNA helicase. Involved in pre-mRNA splicing as component of the spliceosome. Core component of the splicing-dependent multiprotein exon junction complex (EJC) deposited at splice junctions on mRNAs. The EJC is a dynamic structure consisting of core proteins and several peripheral nuclear and cytoplasmic associated factors that join the complex only transiently either during EJC assembly or during subsequent mRNA metabolism. The EJC marks the position of the exon-exon junction in the mature mRNA for the gene expression machinery and the core components remain bound to spliced mRNAs throughout all stages of mRNA metabolism thereby influencing downstream processes including nuclear mRNA export, subcellular mRNA localization, translation efficiency and nonsense-mediated mRNA decay (NMD). Binds spliced mRNA in sequence-independent manner, 20-24 nucleotides upstream of mRNA exon-exon junctions. Involved in craniofacial development. The chain is Eukaryotic initiation factor 4A-III (eif4a3) from Xenopus tropicalis (Western clawed frog).